The chain runs to 293 residues: uncharacterized protein (293 aa).

A helical membrane pass occupies residues 55–77 (IVLAKEIFAVAFFSLGMSCLLMA).

It is found in the membrane. This is an uncharacterized protein from Caenorhabditis elegans.